The primary structure comprises 218 residues: Ribose-5-phosphate isomerase A (218 aa).

Residues 28–31 (TGST), 81–84 (DGAD), and 94–97 (KGGG) contribute to the substrate site. Residue E103 is the Proton acceptor of the active site. A substrate-binding site is contributed by K121.

This sequence belongs to the ribose 5-phosphate isomerase family. Homodimer.

It catalyses the reaction aldehydo-D-ribose 5-phosphate = D-ribulose 5-phosphate. It participates in carbohydrate degradation; pentose phosphate pathway; D-ribose 5-phosphate from D-ribulose 5-phosphate (non-oxidative stage): step 1/1. Functionally, catalyzes the reversible conversion of ribose-5-phosphate to ribulose 5-phosphate. The chain is Ribose-5-phosphate isomerase A from Shewanella piezotolerans (strain WP3 / JCM 13877).